Here is a 423-residue protein sequence, read N- to C-terminus: Putative RING-H2 finger protein ATL49 (423 aa).

A helical membrane pass occupies residues 43 to 63 (ILLIIIILSIIFFISGLLHIL). An RING-type; atypical zinc finger spans residues 126 to 168 (CPVCLCEFETEDKLRLLPKCSHAFHVECIDTWLLSHSTCPLCR). Disordered regions lie at residues 213–236 (NNDS…DMDG) and 377–399 (HRIP…KTPS). Positions 379–389 (IPPEESLKSEN) are enriched in basic and acidic residues.

This sequence belongs to the RING-type zinc finger family. ATL subfamily.

It is found in the membrane. It catalyses the reaction S-ubiquitinyl-[E2 ubiquitin-conjugating enzyme]-L-cysteine + [acceptor protein]-L-lysine = [E2 ubiquitin-conjugating enzyme]-L-cysteine + N(6)-ubiquitinyl-[acceptor protein]-L-lysine.. The protein operates within protein modification; protein ubiquitination. Its function is as follows. May be involved in female gametophyte development. This Arabidopsis thaliana (Mouse-ear cress) protein is Putative RING-H2 finger protein ATL49 (ATL49).